The primary structure comprises 396 residues: Elongation factor Tu (396 aa).

The 196-residue stretch at 10–205 (KPHVNIGTIG…ACDDNIPDPV (196 aa)) folds into the tr-type G domain. The G1 stretch occupies residues 19–26 (GHVDHGKT). Residue 19–26 (GHVDHGKT) participates in GTP binding. Thr26 is a Mg(2+) binding site. Residues 62–66 (GITIN) form a G2 region. The segment at 83–86 (DAPG) is G3. Residues 83-87 (DAPGH) and 138-141 (NKCD) each bind GTP. The tract at residues 138-141 (NKCD) is G4. The segment at 175 to 177 (SAL) is G5.

Belongs to the TRAFAC class translation factor GTPase superfamily. Classic translation factor GTPase family. EF-Tu/EF-1A subfamily. In terms of assembly, monomer.

Its subcellular location is the cytoplasm. The enzyme catalyses GTP + H2O = GDP + phosphate + H(+). Its function is as follows. GTP hydrolase that promotes the GTP-dependent binding of aminoacyl-tRNA to the A-site of ribosomes during protein biosynthesis. The sequence is that of Elongation factor Tu from Corynebacterium glutamicum (strain ATCC 13032 / DSM 20300 / JCM 1318 / BCRC 11384 / CCUG 27702 / LMG 3730 / NBRC 12168 / NCIMB 10025 / NRRL B-2784 / 534).